The sequence spans 263 residues: Endonuclease 8 (263 aa).

Proline 2 (schiff-base intermediate with DNA) is an active-site residue. Glutamate 3 serves as the catalytic Proton donor. The active-site Proton donor; for beta-elimination activity is the lysine 53. DNA is bound by residues glutamine 70, arginine 125, and asparagine 169. The FPG-type zinc-finger motif lies at lysine 229–lysine 263. The Proton donor; for delta-elimination activity role is filled by arginine 253.

The protein belongs to the FPG family. Zn(2+) serves as cofactor.

It catalyses the reaction 2'-deoxyribonucleotide-(2'-deoxyribose 5'-phosphate)-2'-deoxyribonucleotide-DNA = a 3'-end 2'-deoxyribonucleotide-(2,3-dehydro-2,3-deoxyribose 5'-phosphate)-DNA + a 5'-end 5'-phospho-2'-deoxyribonucleoside-DNA + H(+). Its function is as follows. Involved in base excision repair of DNA damaged by oxidation or by mutagenic agents. Acts as a DNA glycosylase that recognizes and removes damaged bases. Has a preference for oxidized pyrimidines, such as thymine glycol, 5,6-dihydrouracil and 5,6-dihydrothymine. Has AP (apurinic/apyrimidinic) lyase activity and introduces nicks in the DNA strand. Cleaves the DNA backbone by beta-delta elimination to generate a single-strand break at the site of the removed base with both 3'- and 5'-phosphates. The polypeptide is Endonuclease 8 (Salmonella agona (strain SL483)).